Reading from the N-terminus, the 429-residue chain is MRLPIRAVTPETESAEIVGWVHEVRDLGGLSFFLIRDRTGIIQVTIPKKKVPAEILDTARSVSRESVVRVRGTVKAIEKAPGGREIVPEELEIISTAESPLPLDVAEKVSAEMDTRLDSRFLDARKPRVRAIFFIRSAVTCAATAFLASRGCINIATPKIVAAATEGGTELFPIAYFEKEAFMNQSPQLYKQMMMAAGFEAVFEIGPIFRAEEHNTVRHLNEATSLDVEVSFADHNDVMELLEDLIVHVYDHVAKDCSEHLAELEIDLKVPSKPFPRIPYAEAIEIANKTIEEKLAFGDDLSPAAERAIGDTVGQHYFIVDWPTDIRPYYAMPYPDRPEFCKAFDLMHPRMELSSGAQRIHDHDLLVERISAKGLSPESFEFYLKPFRYGMPPHAGWGLGIERLVMTMLDLPNIREAVLFPRDRHRLMP.

Glu-166 is an L-aspartate binding site. The interval 188 to 191 (QLYK) is aspartate. Arg-210 is an L-aspartate binding site. ATP contacts are provided by residues 210 to 212 (RAE), 218 to 220 (RHL), and Glu-352. Mg(2+) contacts are provided by Glu-352 and Ser-355. Residues Ser-355 and Arg-359 each contribute to the L-aspartate site. 400 to 403 (GIER) is an ATP binding site.

It belongs to the class-II aminoacyl-tRNA synthetase family. Type 2 subfamily. As to quaternary structure, homodimer. Mg(2+) serves as cofactor.

The protein resides in the cytoplasm. The catalysed reaction is tRNA(Asx) + L-aspartate + ATP = L-aspartyl-tRNA(Asx) + AMP + diphosphate. Functionally, aspartyl-tRNA synthetase with relaxed tRNA specificity since it is able to aspartylate not only its cognate tRNA(Asp) but also tRNA(Asn). Reaction proceeds in two steps: L-aspartate is first activated by ATP to form Asp-AMP and then transferred to the acceptor end of tRNA(Asp/Asn). This Methanoculleus marisnigri (strain ATCC 35101 / DSM 1498 / JR1) protein is Aspartate--tRNA(Asp/Asn) ligase.